The chain runs to 401 residues: Aspartokinase (401 aa).

Belongs to the aspartokinase family.

It catalyses the reaction L-aspartate + ATP = 4-phospho-L-aspartate + ADP. It participates in amino-acid biosynthesis; L-lysine biosynthesis via DAP pathway; (S)-tetrahydrodipicolinate from L-aspartate: step 1/4. It functions in the pathway amino-acid biosynthesis; L-methionine biosynthesis via de novo pathway; L-homoserine from L-aspartate: step 1/3. The protein operates within amino-acid biosynthesis; L-threonine biosynthesis; L-threonine from L-aspartate: step 1/5. The sequence is that of Aspartokinase (lysC) from Rickettsia felis (strain ATCC VR-1525 / URRWXCal2) (Rickettsia azadi).